We begin with the raw amino-acid sequence, 192 residues long: Genome polyprotein (192 aa).

Residues 1 to 52 (RNLGKVIDTLTCGFADLMGYIPLVGAPLGGAARALAHGVRVLEDGVNYATGN) are Cytoplasmic-facing. The interaction with APOA2 stretch occupies residues 6-57 (VIDTLTCGFADLMGYIPLVGAPLGGAARALAHGVRVLEDGVNYATGNLPGCS). The segment at 48–51 (YATG) is important for lipid droplets localization. Residues 53-73 (LPGCSFSIFLLALLSCLTVPA) traverse the membrane as a helical segment. A propeptide spans 62 to 75 (LLALLSCLTVPASA) (ER anchor for the core protein, removed in mature form by host signal peptidase). Over 74-192 (SAYQVRNSSG…WTTQGCNCSI (119 aa)) the chain is Lumenal. Residues N80, N93, and N118 are each glycosylated (N-linked (GlcNAc...) asparagine; by host). The segment at 149 to 180 (LVGSATLCSALYVGDLCGSVFLVGQLFTFSPR) is important for fusion. An N-linked (GlcNAc...) asparagine; by host glycan is attached at N189.

This sequence belongs to the hepacivirus polyprotein family. In terms of assembly, homooligomer. Interacts with E1 (via C-terminus). Interacts with the non-structural protein 5A. Interacts (via N-terminus) with host STAT1 (via SH2 domain); this interaction results in decreased STAT1 phosphorylation and ubiquitin-mediated proteasome-dependent STAT1 degradation, leading to decreased IFN-stimulated gene transcription. Interacts with host STAT3; this interaction constitutively activates STAT3. Interacts with host LTBR receptor. Interacts with host TNFRSF1A receptor and possibly induces apoptosis. Interacts with host HNRPK. Interacts with host YWHAE. Interacts with host UBE3A/E6AP. Interacts with host DDX3X. Interacts with host APOA2. Interacts with host RXRA protein. Interacts with host SP110 isoform 3/Sp110b; this interaction sequesters the transcriptional corepressor SP110 away from the nucleus. Interacts with host CREB3 nuclear transcription protein; this interaction triggers cell transformation. Interacts with host ACY3. Interacts with host C1QR1. Interacts with host RBM24; this interaction, which enhances the interaction of the mature core protein with 5'-UTR, may inhibit viral translation and favor replication. Interacts with host EIF2AK2/PKR; this interaction induces the autophosphorylation of EIF2AK2. Part of the viral assembly initiation complex composed of NS2, E1, E2, NS3, NS4A, NS5A and the mature core protein. As to quaternary structure, forms a heterodimer with envelope glycoprotein E2. Interacts with mature core protein. Interacts with protease NS2. The heterodimer E1/E2 interacts with host CLDN1; this interaction plays a role in viral entry into host cell. Interacts with host SPSB2 (via C-terminus). Part of the viral assembly initiation complex composed of NS2, E1, E2, NS3, NS4A, NS5A and the mature core protein. Specific enzymatic cleavages in vivo yield mature proteins. The structural proteins, core, E1, E2 and p7 are produced by proteolytic processing by host signal peptidases. The core protein precursor is synthesized as a 23 kDa, which is retained in the ER membrane through the hydrophobic signal peptide. Cleavage by the signal peptidase releases the 21 kDa mature core protein. The cleavage of the core protein precursor occurs between aminoacids 176 and 188 but the exact cleavage site is not known. Some degraded forms of the core protein appear as well during the course of infection. The other proteins (p7, NS2, NS3, NS4A, NS4B, NS5A and NS5B) are cleaved by the viral proteases. Autoprocessing between NS2 and NS3 is mediated by the NS2 cysteine protease catalytic domain and regulated by the NS3 N-terminal domain. Post-translationally, phosphorylated by host PKC and PKA. In terms of processing, ubiquitinated; mediated by UBE3A and leading to core protein subsequent proteasomal degradation. Highly N-glycosylated.

It localises to the host endoplasmic reticulum membrane. The protein localises to the host mitochondrion membrane. The protein resides in the virion. Its subcellular location is the host cytoplasm. It is found in the host nucleus. It localises to the host lipid droplet. The protein localises to the virion membrane. Its function is as follows. Packages viral RNA to form a viral nucleocapsid, and promotes virion budding. Participates in the viral particle production as a result of its interaction with the non-structural protein 5A. Binds RNA and may function as a RNA chaperone to induce the RNA structural rearrangements taking place during virus replication. Modulates viral translation initiation by interacting with viral IRES and 40S ribosomal subunit. Affects various cell signaling pathways, host immunity and lipid metabolism. Prevents the establishment of cellular antiviral state by blocking the interferon-alpha/beta (IFN-alpha/beta) and IFN-gamma signaling pathways and by blocking the formation of phosphorylated STAT1 and promoting ubiquitin-mediated proteasome-dependent degradation of STAT1. Activates STAT3 leading to cellular transformation. Regulates the activity of cellular genes, including c-myc and c-fos. May repress the promoter of p53, and sequester CREB3 and SP110 isoform 3/Sp110b in the cytoplasm. Represses cell cycle negative regulating factor CDKN1A, thereby interrupting an important check point of normal cell cycle regulation. Targets transcription factors involved in the regulation of inflammatory responses and in the immune response: suppresses TNF-induced NF-kappa-B activation, and activates AP-1. Binds to dendritic cells (DCs) via C1QR1, resulting in down-regulation of T-lymphocytes proliferation. Alters lipid metabolism by interacting with hepatocellular proteins involved in lipid accumulation and storage. Induces up-regulation of FAS promoter activity, and thereby contributes to the increased triglyceride accumulation in hepatocytes (steatosis). Functionally, forms a heterodimer with envelope glycoprotein E2, which mediates virus attachment to the host cell, virion internalization through clathrin-dependent endocytosis and fusion with host membrane. Fusion with the host cell is most likely mediated by both E1 and E2, through conformational rearrangements of the heterodimer required for fusion rather than a classical class II fusion mechanism. E1/E2 heterodimer binds host apolipoproteins such as APOB and ApoE thereby forming a lipo-viro-particle (LVP). APOE associated to the LVP allows the initial virus attachment to cell surface receptors such as the heparan sulfate proteoglycans (HSPGs), syndecan-1 (SDC1), syndecan-1 (SDC2), the low-density lipoprotein receptor (LDLR) and scavenger receptor class B type I (SCARB1). The cholesterol transfer activity of SCARB1 allows E2 exposure and binding of E2 to SCARB1 and the tetraspanin CD81. E1/E2 heterodimer binding on CD81 activates the epithelial growth factor receptor (EGFR) signaling pathway. Diffusion of the complex E1-E2-EGFR-SCARB1-CD81 to the cell lateral membrane allows further interaction with Claudin 1 (CLDN1) and occludin (OCLN) to finally trigger HCV entry. This chain is Genome polyprotein, found in Hepatitis C virus (isolate EC1) (HCV).